Here is a 206-residue protein sequence, read N- to C-terminus: Small ribosomal subunit protein uS4 (206 aa).

One can recognise an S4 RNA-binding domain in the interval 96 to 159 (TRLDNVVYRM…KKQARISASL (64 aa)).

Belongs to the universal ribosomal protein uS4 family. As to quaternary structure, part of the 30S ribosomal subunit. Contacts protein S5. The interaction surface between S4 and S5 is involved in control of translational fidelity.

Its function is as follows. One of the primary rRNA binding proteins, it binds directly to 16S rRNA where it nucleates assembly of the body of the 30S subunit. In terms of biological role, with S5 and S12 plays an important role in translational accuracy. The chain is Small ribosomal subunit protein uS4 from Shewanella violacea.